The following is an 804-amino-acid chain: Lon protease 2 (804 aa).

The 194-residue stretch at 6–199 folds into the Lon N-terminal domain; it reads MPVCPVRGSV…AVLVLLEAEL (194 aa). 362-369 provides a ligand contact to ATP; sequence GPPGVGKT. A Lon proteolytic domain is found at 598-779; sequence EPQVGVATGM…DQVLDLALVG (182 aa). Residues Ser-685 and Lys-728 contribute to the active site.

Belongs to the peptidase S16 family. Homohexamer. Organized in a ring with a central cavity.

It is found in the cytoplasm. The enzyme catalyses Hydrolysis of proteins in presence of ATP.. In terms of biological role, ATP-dependent serine protease that mediates the selective degradation of mutant and abnormal proteins as well as certain short-lived regulatory proteins. Required for cellular homeostasis and for survival from DNA damage and developmental changes induced by stress. Degrades polypeptides processively to yield small peptide fragments that are 5 to 10 amino acids long. Binds to DNA in a double-stranded, site-specific manner. This is Lon protease 2 from Thermus thermophilus (strain ATCC BAA-163 / DSM 7039 / HB27).